The chain runs to 98 residues: Small ribosomal subunit protein bS16 (98 aa).

The protein belongs to the bacterial ribosomal protein bS16 family.

The protein is Small ribosomal subunit protein bS16 of Pseudothermotoga lettingae (strain ATCC BAA-301 / DSM 14385 / NBRC 107922 / TMO) (Thermotoga lettingae).